Consider the following 320-residue polypeptide: Heterogeneous nuclear ribonucleoprotein A1-like 3 (320 aa).

RRM domains are found at residues 14–97 (RKLF…DSQR) and 105–184 (KKIF…LSKQ). Disordered regions lie at residues 182–218 (SKQE…NFGR) and 271–320 (SNFG…GRRF). Over residues 197-218 (SGSGNFGGGRGGGFGGNDNFGR) the composition is skewed to gly residues. Positions 308 to 320 (SSSSSSYGSGRRF) are enriched in low complexity.

In Homo sapiens (Human), this protein is Heterogeneous nuclear ribonucleoprotein A1-like 3.